The following is a 214-amino-acid chain: Variable small protein 1 (214 aa).

Residues M1–S18 form the signal peptide. The N-palmitoyl cysteine moiety is linked to residue C19. C19 carries the S-diacylglycerol cysteine lipid modification.

Belongs to the variable small protein (Vsp) family.

The protein resides in the cell outer membrane. Its function is as follows. The Vlp and Vsp proteins are antigenically distinct proteins, only one vlp or vsp gene is transcriptionally active at any one time. Switching between these genes is a mechanism of host immune response evasion. The polypeptide is Variable small protein 1 (Borrelia hermsii).